Consider the following 195-residue polypeptide: Imidazoleglycerol-phosphate dehydratase (195 aa).

Belongs to the imidazoleglycerol-phosphate dehydratase family.

It is found in the cytoplasm. It catalyses the reaction D-erythro-1-(imidazol-4-yl)glycerol 3-phosphate = 3-(imidazol-4-yl)-2-oxopropyl phosphate + H2O. Its pathway is amino-acid biosynthesis; L-histidine biosynthesis; L-histidine from 5-phospho-alpha-D-ribose 1-diphosphate: step 6/9. This is Imidazoleglycerol-phosphate dehydratase from Koribacter versatilis (strain Ellin345).